A 576-amino-acid polypeptide reads, in one-letter code: Vesicular glutamate transporter 1 (576 aa).

Over 1 to 63 (MEFRKEEFKK…CTCFGLPRRY (63 aa)) the chain is Cytoplasmic. A helical membrane pass occupies residues 64–84 (IIAIMSGLGFCISFGIRCNLG). The Vesicular portion of the chain corresponds to 85 to 116 (VAIVSMVNNNTVYKGNKIVIEQAQFTWDPETV). Asparagine 93 is a glycosylation site (N-linked (GlcNAc...) asparagine). A helical membrane pass occupies residues 117-137 (GMIHGSFFWGYIVTQIPGGYI). Residues 138–140 (CQK) lie on the Cytoplasmic side of the membrane. Residues 141-161 (FAANRVFGFAIVATSTLNMLI) form a helical membrane-spanning segment. At 162-168 (PSAARVH) the chain is on the vesicular side. A helical membrane pass occupies residues 169–189 (FACVICVRILQGLVEGVTYPA). At 190 to 208 (CHGIWSKWAPPLERSRLAT) the chain is on the cytoplasmic side. Residues 209-229 (TAFCGSYAGAVVAMPLAGVLV) form a helical membrane-spanning segment. Residues 230–236 (QYSGWSS) lie on the Vesicular side of the membrane. The chain crosses the membrane as a helical span at residues 237–257 (VFYVYGSFGIMWYMFWILVSY). Residues 258–302 (ESPAIHPTISEEEKKYIEESIGESTGLMNPMAKFKAPWRKFFTSM) lie on the Cytoplasmic side of the membrane. The chain crosses the membrane as a helical span at residues 303–323 (PVYAIIVANFCRSWTFYLLLI). At 324 to 341 (SQPAYFEEVFGFEISKVG) the chain is on the vesicular side. The chain crosses the membrane as a helical span at residues 342–362 (LLSALPHLVMTIIVPIGGQIA). Residues 363 to 378 (DFLRTKRIMSTTNVRK) are Cytoplasmic-facing. Residues 379 to 399 (MMNCGGFGMEATLLLVVGYSH) form a helical membrane-spanning segment. Over 400–401 (SR) the chain is Vesicular. Residues 402 to 422 (GVAISFLVLAVGFSGFAISGF) form a helical membrane-spanning segment. Residues 423–435 (NVNHLDIAPRYAS) lie on the Cytoplasmic side of the membrane. The helical transmembrane segment at 436-456 (ILMGISNGVGTLSGMVCPLIV) threads the bilayer. At 457–469 (GAMTKHKTREEWQ) the chain is on the vesicular side. The helical transmembrane segment at 470-490 (YVFLIASLVHYGGVLFYGIFA) threads the bilayer. Residues 491 to 576 (SGEKQPWAEP…YGTVAERDLS (86 aa)) lie on the Cytoplasmic side of the membrane. The tract at residues 517 to 547 (ADESEEQSQAYGAYGSYGATQTTSQQNGGWT) is disordered. Residues 534–545 (GATQTTSQQNGG) show a composition bias toward polar residues.

The protein belongs to the major facilitator superfamily. Sodium/anion cotransporter family. VGLUT subfamily.

It localises to the cytoplasmic vesicle. The protein localises to the secretory vesicle. Its subcellular location is the synaptic vesicle membrane. The protein resides in the cell membrane. It is found in the synapse. It localises to the synaptosome. It carries out the reaction L-glutamate(out) = L-glutamate(in). The catalysed reaction is chloride(in) = chloride(out). It catalyses the reaction 3 Na(+)(out) + phosphate(out) = 3 Na(+)(in) + phosphate(in). The enzyme catalyses phosphate(in) = phosphate(out). It carries out the reaction K(+)(in) + H(+)(out) = K(+)(out) + H(+)(in). With respect to regulation, chloride channel activity is allosterically activated by lumenal H(+) and Cl(-) leading to synaptic vesicles acidification. The L-glutamate transport activity is allosterically activated by lumenal H(+) and Cl(-). The allosteric activation by H(+) efficiently prevents non-vesicular efflux across the plasma membrane, thereby restricting L-glutamate transport activity to acidic membranes such as synaptic vesicles. Multifunctional transporter that transports L-glutamate as well as multiple ions such as chloride, proton, potassium, sodium and phosphate. At the synaptic vesicle membrane, mainly functions as an uniporter which transports preferentially L-glutamate but also phosphate from the cytoplasm into synaptic vesicles at presynaptic nerve terminals of excitatory neural cells. The L-glutamate or phosphate uniporter activity is electrogenic and is driven by the proton electrochemical gradient, mainly by the electrical gradient established by the vacuolar H(+)-ATPase across the synaptic vesicle membrane. In addition, functions as a chloride channel that allows a chloride permeation through the synaptic vesicle membrane that affects the proton electrochemical gradient and promotes synaptic vesicles acidification. Moreover, may function as a K(+)/H(+) antiport allowing to maintain the electrical gradient and to decrease chemical gradient and therefore sustain vesicular glutamate uptake. The vesicular K(+)/H(+) antiport activity is electroneutral. At the plasma membrane, following exocytosis, functions as a symporter of Na(+) and phosphate from the extracellular space to the cytoplasm allowing synaptic phosphate homeostasis regulation. The symporter activity is driven by an inside negative membrane potential and is electrogenic. Is necessary for synaptic signaling of visual-evoked responses from photoreceptors. In Xenopus tropicalis (Western clawed frog), this protein is Vesicular glutamate transporter 1.